Here is a 502-residue protein sequence, read N- to C-terminus: Dipeptide and tripeptide permease A (502 aa).

Over 1 to 35 (MSTANNKPTDESVSLNAFKQPKAFYLIFSIELWER) the chain is Cytoplasmic. The helical transmembrane segment at 36–56 (FGFYGLQGIMAVYLVKQLGMS) threads the bilayer. At 57 to 60 (EADS) the chain is on the periplasmic side. A helical membrane pass occupies residues 61-81 (ITLFSSFSALVYGLVAVGGWL). The Cytoplasmic portion of the chain corresponds to 82 to 90 (GDKVLGTKR). Residues 91-111 (VIMLGAVVLAIGYGLVAWSGH) form a helical membrane-spanning segment. A topological domain (periplasmic) is located at residue Asp112. Residues 113–133 (AAVVYMGMATIAVGNGLFKAN) traverse the membrane as a helical segment. Topologically, residues 134 to 154 (PSSLLSTCYNKDDPRLDGAFT) are cytoplasmic. A helical membrane pass occupies residues 155-175 (MYYMSINIGSFFSMLATPWLA). Residues 176 to 179 (AKFG) are Periplasmic-facing. The chain crosses the membrane as a helical span at residues 180-200 (WSVAFALSFVGMLITVVNFLF). Residues 201–218 (CRSWVKNYGSKPDFEPVH) lie on the Cytoplasmic side of the membrane. The helical transmembrane segment at 219–239 (IGKLLATIVGVVILATIATWL) threads the bilayer. At 240–247 (LHNQGVAR) the chain is on the periplasmic side. The chain crosses the membrane as a helical span at residues 248–268 (AVLGVVALGIICIFAKEAFAM). The Cytoplasmic segment spans residues 269–275 (QGAARRK). The chain crosses the membrane as a helical span at residues 276-296 (MIVAFILMLQAVVFFVLYSQM). Residues 297-321 (PTSLNFFAIRNVEHSILSIAFEPEQ) are Periplasmic-facing. Residues 322–342 (FQALNPFWIMIGSPILAAIYN) form a helical membrane-spanning segment. The Cytoplasmic segment spans residues 343–353 (KMGDRLPMPHK). A helical transmembrane segment spans residues 354 to 374 (FAIGMVLCSGAFLVLPLGTKF). Residues 375–384 (ATDAGIVSVN) lie on the Periplasmic side of the membrane. The chain crosses the membrane as a helical span at residues 385-405 (WLILSYALQSIGELMISGLGL). At 406 to 415 (AMVAQLVPQR) the chain is on the cytoplasmic side. Residues 416–436 (LMGFIMGSWFLTTAGAALIAG) traverse the membrane as a helical segment. Over 437–460 (KIANLMAVPENVTDPLVSLEVYGR) the chain is Periplasmic. The helical transmembrane segment at 461 to 481 (VFMQIGIATAVIAVLMLLTAP) threads the bilayer. Topologically, residues 482–502 (KLNRMTLEDDKAAKATDTATA) are cytoplasmic.

Belongs to the major facilitator superfamily. Proton-dependent oligopeptide transporter (POT/PTR) (TC 2.A.17) family. DtpA subfamily.

The protein localises to the cell inner membrane. In terms of biological role, proton-dependent permease that transports di- and tripeptides. This chain is Dipeptide and tripeptide permease A, found in Enterobacter sp. (strain 638).